The chain runs to 388 residues: Fetuin-B (388 aa).

The first 18 residues, 1-18 (MGLLRLLVLCTLAACCMA), serve as a signal peptide directing secretion. Cystatin fetuin-B-type domains are found at residues 28–141 (QRPL…YNCT) and 152–264 (TTCP…VTCE). A glycan (N-linked (GlcNAc...) asparagine) is linked at asparagine 40. Cystine bridges form between cysteine 96–cysteine 107, cysteine 120–cysteine 140, cysteine 154–cysteine 157, cysteine 217–cysteine 224, and cysteine 237–cysteine 263. Residue asparagine 139 is glycosylated (N-linked (GlcNAc...) asparagine). Disordered regions lie at residues 270–343 (AQVP…PQGD) and 367–388 (KEQR…VLPP). Residues 279-300 (AVTQGPQKLPQKNTAPTSSPSV) are compositionally biased toward polar residues. 2 O-linked (GalNAc...) threonine glycosylation sites follow: threonine 292 and threonine 295. Serine 321 bears the Phosphoserine mark. Residues 367 to 381 (KEQRSAECPGPEKEN) show a composition bias toward basic and acidic residues.

The protein belongs to the fetuin family. In terms of tissue distribution, liver, lung and tongue.

It localises to the secreted. Protease inhibitor required for egg fertilization. Required to prevent premature zona pellucida hardening before fertilization, probably by inhibiting the protease activity of ASTL, a protease that mediates the cleavage of ZP2 and triggers zona pellucida hardening. This is Fetuin-B (Fetub) from Mus musculus (Mouse).